Reading from the N-terminus, the 191-residue chain is dTTP/UTP pyrophosphatase (191 aa).

Aspartate 68 (proton acceptor) is an active-site residue.

It belongs to the Maf family. YhdE subfamily. The cofactor is a divalent metal cation.

It is found in the cytoplasm. The enzyme catalyses dTTP + H2O = dTMP + diphosphate + H(+). The catalysed reaction is UTP + H2O = UMP + diphosphate + H(+). Functionally, nucleoside triphosphate pyrophosphatase that hydrolyzes dTTP and UTP. May have a dual role in cell division arrest and in preventing the incorporation of modified nucleotides into cellular nucleic acids. This is dTTP/UTP pyrophosphatase from Thermoanaerobacter pseudethanolicus (strain ATCC 33223 / 39E) (Clostridium thermohydrosulfuricum).